We begin with the raw amino-acid sequence, 284 residues long: Putative ABC transporter ATP-binding protein PH1815 (284 aa).

The region spanning 4–244 is the ABC transporter domain; it reads IEVEDVSFRY…VEFLRTIGVK (241 aa). ATP is bound at residue 38-45; sequence GPSGSGKS.

The protein belongs to the ABC transporter superfamily.

Its subcellular location is the cell membrane. Its function is as follows. Probably part of an ABC transporter complex. Responsible for energy coupling to the transport system. In Pyrococcus horikoshii (strain ATCC 700860 / DSM 12428 / JCM 9974 / NBRC 100139 / OT-3), this protein is Putative ABC transporter ATP-binding protein PH1815.